The following is a 122-amino-acid chain: Large ribosomal subunit protein uL14 (122 aa).

It belongs to the universal ribosomal protein uL14 family. As to quaternary structure, part of the 50S ribosomal subunit. Forms a cluster with proteins L3 and L19. In the 70S ribosome, L14 and L19 interact and together make contacts with the 16S rRNA in bridges B5 and B8.

Its function is as follows. Binds to 23S rRNA. Forms part of two intersubunit bridges in the 70S ribosome. In Pelobacter propionicus (strain DSM 2379 / NBRC 103807 / OttBd1), this protein is Large ribosomal subunit protein uL14.